We begin with the raw amino-acid sequence, 4471 residues long: Dynein axonemal heavy chain 10 (4471 aa).

Residues 1–1793 (MVPEEVEVEI…NIRQCTGTFG (1793 aa)) form a stem region. Residues 46-65 (TESLGQPLNREDEEMDKEIS) form a disordered region. Coiled coils occupy residues 203–223 (NVQKFASNIQRTMQQLEGEIK), 602–622 (QEVKQKYLEVGRTMKEYEDRK), 1071–1106 (KLLNESAKEELYNLHEEMEHLAKNLRKIPNTLEDLK), and 1217–1245 (VELLGVYERELARHEKSRQELANAEKLFD). N1074 carries an N-linked (GlcNAc...) asparagine glycan. One copy of the TPR 1 repeat lies at 1221–1254 (GVYERELARHEKSRQELANAEKLFDLPITMYPEL). 4 AAA regions span residues 1794–2015 (YGYE…VLVM), 2075–2294 (DAVE…VIVE), 2417–2665 (IHAP…VFNG), and 2765–3014 (EYNE…LRRS). Positions 1832–1839 (GPAGTGKT) match the GPAGTGKT motif motif. 1832-1839 (GPAGTGKT) serves as a coordination point for ATP. The CFDEFNR motif motif lies at 1882 to 1888 (CFDEFNR). ATP is bound by residues 2113-2120 (GPTRGGKS) and 2455-2462 (GESGTSKT). TPR repeat units follow at residues 2736–2769 (MALHEGEPRIYEDIQDYEAAKALFQEILEEYNES) and 2771–2797 (TKMNLVLFDDALEHLTRVHRIIRMDRG). Positions 2747–2770 (EDIQDYEAAKALFQEILEEYNESN) form a coiled coil. 2803-2810 (GVGGSGKQ) lines the ATP pocket. Residues 3029 to 3313 (YSKLLDEKTQ…QKLQEEAEIM (285 aa)) are stalk. Coiled coils occupy residues 3045-3131 (KRLD…LAEV), 3257-3327 (KREK…ISGL), and 3567-3638 (ERRE…EKTA). The AAA 5 stretch occupies residues 3399–3629 (LTDDVEISRW…TKSKATEVSE (231 aa)). One copy of the TPR 4 repeat lies at 3802-3837 (WQEWYDLDSLEQFPVPLGYDNNITPFQKLLILRCFR). The segment at 3845–4062 (VTDYVTVTMG…FQVCMEILNT (218 aa)) is AAA 6. Residues 4074–4108 (RIPWGSLKYLIGEVMYGGRAIDSFDRRILTIYMDE) form a TPR 5 repeat. Residues 4235-4260 (LLQELERFNKLVVRMTKSLAELQRAL) are a coiled coil.

This sequence belongs to the dynein heavy chain family. As to quaternary structure, consists of at least two heavy chains and a number of intermediate and light chains. As to expression, expressed primarily in trachea and testis, 2 tissues containing axonemal structures. Also expressed in brain but not in adult heart.

It localises to the cytoplasm. The protein resides in the cytoskeleton. The protein localises to the cilium axoneme. Functionally, force generating protein of respiratory cilia. Produces force towards the minus ends of microtubules. Dynein has ATPase activity; the force-producing power stroke is thought to occur on release of ADP. Involved in sperm motility; implicated in sperm flagellar assembly. Probable inner arm dynein heavy chain. The chain is Dynein axonemal heavy chain 10 (DNAH10) from Homo sapiens (Human).